The chain runs to 483 residues: Glutamate--tRNA ligase (483 aa).

The 'HIGH' region signature appears at P14–T24. Positions K253–R257 match the 'KMSKS' region motif. ATP is bound at residue K256.

This sequence belongs to the class-I aminoacyl-tRNA synthetase family. Glutamate--tRNA ligase type 1 subfamily. As to quaternary structure, monomer.

The protein localises to the cytoplasm. It carries out the reaction tRNA(Glu) + L-glutamate + ATP = L-glutamyl-tRNA(Glu) + AMP + diphosphate. Catalyzes the attachment of glutamate to tRNA(Glu) in a two-step reaction: glutamate is first activated by ATP to form Glu-AMP and then transferred to the acceptor end of tRNA(Glu). The sequence is that of Glutamate--tRNA ligase from Deinococcus radiodurans (strain ATCC 13939 / DSM 20539 / JCM 16871 / CCUG 27074 / LMG 4051 / NBRC 15346 / NCIMB 9279 / VKM B-1422 / R1).